The primary structure comprises 597 residues: Probable serine/threonine-protein kinase DDB_G0281745 (597 aa).

The span at 49 to 61 (TIDNSNGKQSTTP) shows a compositional bias: polar residues. Positions 49–320 (TIDNSNGKQS…RNNESTATTA (272 aa)) are disordered. Residues 72–97 (QPPPQQSQQQPPQPLKPIPATRPVPT) are compositionally biased toward pro residues. The span at 114–140 (TLPTTNSSTKYSTLPSRQFFEVSSSPG) shows a compositional bias: polar residues. Over residues 157–168 (SLSSNQNGSNLN) the composition is skewed to low complexity. Pro residues predominate over residues 208 to 234 (PSPPSPPLQSPQPTPQQQPPPLKPIPQ). Residues 235-264 (PQQQQQQQQQQQQQQQQQQQQQQQQQQQQQ) show a composition bias toward low complexity. A compositionally biased stretch (pro residues) spans 265 to 274 (QPPPLKPIPQ). The span at 275-301 (PQQSQPTQPIKSQIQIPITNTNGNTNG) shows a compositional bias: low complexity. Residues 334–585 (KFVGNEIGSG…KVLDTIQNIY (252 aa)) enclose the Protein kinase domain. ATP-binding positions include 340–348 (IGSGKYGSV) and Lys-361. Asp-454 acts as the Proton acceptor in catalysis.

The protein belongs to the protein kinase superfamily. TKL Ser/Thr protein kinase family.

The enzyme catalyses L-seryl-[protein] + ATP = O-phospho-L-seryl-[protein] + ADP + H(+). It catalyses the reaction L-threonyl-[protein] + ATP = O-phospho-L-threonyl-[protein] + ADP + H(+). This Dictyostelium discoideum (Social amoeba) protein is Probable serine/threonine-protein kinase DDB_G0281745.